We begin with the raw amino-acid sequence, 513 residues long: Noroxomaritidine synthase 2 (513 aa).

A helical transmembrane segment spans residues 14–34; that stretch reads HYPEILIAIACFLIFSLLLSA. Cys-458 is a heme binding site.

The protein belongs to the cytochrome P450 family. Heme is required as a cofactor.

The protein localises to the membrane. The enzyme catalyses 4'-O-methylnorbelladine + reduced [NADPH--hemoprotein reductase] + O2 = (10bR,4aS)-noroxomaritidine + oxidized [NADPH--hemoprotein reductase] + 2 H2O + H(+). It catalyses the reaction 4'-O-methylnorbelladine + reduced [NADPH--hemoprotein reductase] + O2 = (10bS,4aR)-noroxomaritidine + oxidized [NADPH--hemoprotein reductase] + 2 H2O + H(+). It participates in alkaloid biosynthesis. Its function is as follows. Cytochrome P450 that catalyzes an intramolecular para-para' C-C phenol coupling of 4'-O-methylnorbelladine in alkaloids biosynthesis, including haemanthamine- and crinamine-type alkaloids, promising anticancer agents. Catalyzes the formation of (10bR,4aS)-noroxomaritidine and (10bS,4aR)-noroxomaritidine from 4'-O-methylnorbelladine. This chain is Noroxomaritidine synthase 2, found in Narcissus aff. pseudonarcissus MK-2014 (Daffodil).